Here is a 185-residue protein sequence, read N- to C-terminus: Ribosome-recycling factor (185 aa).

It belongs to the RRF family.

It is found in the cytoplasm. Functionally, responsible for the release of ribosomes from messenger RNA at the termination of protein biosynthesis. May increase the efficiency of translation by recycling ribosomes from one round of translation to another. This chain is Ribosome-recycling factor, found in Francisella philomiragia subsp. philomiragia (strain ATCC 25017 / CCUG 19701 / FSC 153 / O#319-036).